The chain runs to 503 residues: Arginyl-tRNA--protein transferase 1 (503 aa).

This sequence belongs to the R-transferase family.

It is found in the cytoplasm. It catalyses the reaction an N-terminal L-alpha-aminoacyl-[protein] + L-arginyl-tRNA(Arg) = an N-terminal L-arginyl-L-aminoacyl-[protein] + tRNA(Arg) + H(+). Functionally, involved in the post-translational conjugation of arginine to the N-terminal aspartate or glutamate of a protein. This arginylation is required for degradation of the protein via the ubiquitin pathway. Does not arginylate cysteine residues. The chain is Arginyl-tRNA--protein transferase 1 (ATE1) from Saccharomyces cerevisiae (strain ATCC 204508 / S288c) (Baker's yeast).